The chain runs to 231 residues: Large ribosomal subunit protein uL1 (231 aa).

It belongs to the universal ribosomal protein uL1 family. As to quaternary structure, part of the 50S ribosomal subunit.

In terms of biological role, binds directly to 23S rRNA. The L1 stalk is quite mobile in the ribosome, and is involved in E site tRNA release. Functionally, protein L1 is also a translational repressor protein, it controls the translation of the L11 operon by binding to its mRNA. This is Large ribosomal subunit protein uL1 from Alcanivorax borkumensis (strain ATCC 700651 / DSM 11573 / NCIMB 13689 / SK2).